A 350-amino-acid polypeptide reads, in one-letter code: Induced myeloid leukemia cell differentiation protein Mcl-1 homolog (350 aa).

Residues K5 and K40 each participate in a glycyl lysine isopeptide (Lys-Gly) (interchain with G-Cter in ubiquitin) cross-link. The segment at 104–175 is PEST-like; it reads CASPPEEMEG…PAEEEEDELF (72 aa). The residue at position 121 (S121) is a Phosphoserine. K136 is covalently cross-linked (Glycyl lysine isopeptide (Lys-Gly) (interchain with G-Cter in ubiquitin)). The tract at residues 148 to 170 is disordered; it reads GEASSGPGTDGSLPSTPPPAEEE. Residue S159 is modified to Phosphoserine; by GSK3-alpha and GSK3-beta. S162 is subject to Phosphoserine. A Phosphothreonine; by MAPK modification is found at T163. Glycyl lysine isopeptide (Lys-Gly) (interchain with G-Cter in ubiquitin) cross-links involve residues K194 and K197. The short motif at 209 to 223 is the BH3 element; the sequence is ALETLRRVGDGVQRN. Positions 252–272 match the BH1 motif; that stretch reads HVFSDGVTNWGRIVTLISFGA. Residues 304 to 319 carry the BH2 motif; that stretch reads DWLVKQRGWDGFVEFF. A helical transmembrane segment spans residues 328–348; that stretch reads IRNVLLAFAGVAGVGAGLAYL.

This sequence belongs to the Bcl-2 family. In terms of assembly, interacts with HIF3A (via C-terminus domain). Interacts with BOK, BIK, BAX, BAK1, and TPT1. Interacts with unphosphorylated BAD. Interacts with BMF, BBC3 and PMAIP1. Interacts with BOP. Interacts with BCL2L11; may sequester BCL2L11 to prevent its pro-apoptotic activity. Interacts with GIMAP5 and HSPA8/HSC70; the interaction between HSPA8 and MCL1 is impaired in the absence of GIMAP5. Cleaved by CASP3 during apoptosis, yielding a pro-apoptotic C-terminal fragment. Post-translationally, rapidly degraded in the absence of phosphorylation in the PEST region. In terms of processing, phosphorylated on Ser-159, by GSK3, in response to IL3/interleukin-3 withdrawal. Phosphorylation at Ser-159 induces ubiquitination and proteasomal degradation, abrogating the anti-apoptotic activity. Treatment with taxol or okadaic acid induces phosphorylation on additional sites. Ubiquitinated. Ubiquitination is induced by phosphorylation at Ser-159. Deubiquitinated by USP20; leading to increased stability.

Its subcellular location is the membrane. The protein localises to the cytoplasm. The protein resides in the mitochondrion. It localises to the nucleus. It is found in the nucleoplasm. In terms of biological role, involved in the regulation of apoptosis versus cell survival, and in the maintenance of viability but not of proliferation. Mediates its effects by interactions with a number of other regulators of apoptosis. This is Induced myeloid leukemia cell differentiation protein Mcl-1 homolog (MCL1) from Felis catus (Cat).